The sequence spans 523 residues: DNA-directed RNA polymerase subunit Rpo2N (523 aa).

Positions 501 to 523 (SSMGVEGIPGISMETTSTTSADD) are disordered. The segment covering 513–523 (METTSTTSADD) has biased composition (polar residues).

The protein belongs to the RNA polymerase beta chain family. Part of the RNA polymerase complex.

It is found in the cytoplasm. The catalysed reaction is RNA(n) + a ribonucleoside 5'-triphosphate = RNA(n+1) + diphosphate. In terms of biological role, DNA-dependent RNA polymerase (RNAP) catalyzes the transcription of DNA into RNA using the four ribonucleoside triphosphates as substrates. The Rpo2 subunit (Rpo2N and Rpo2C in this organism) is implicated in DNA promoter recognition and in nucleotide binding. This Halobacterium salinarum (strain ATCC 29341 / DSM 671 / R1) protein is DNA-directed RNA polymerase subunit Rpo2N.